We begin with the raw amino-acid sequence, 155 residues long: Small ribosomal subunit protein uS7c (155 aa).

It belongs to the universal ribosomal protein uS7 family. Part of the 30S ribosomal subunit.

It is found in the plastid. Its subcellular location is the chloroplast. Its function is as follows. One of the primary rRNA binding proteins, it binds directly to 16S rRNA where it nucleates assembly of the head domain of the 30S subunit. The polypeptide is Small ribosomal subunit protein uS7c (Beta vulgaris (Sugar beet)).